The chain runs to 174 residues: Small t antigen (174 aa).

M1 carries the post-translational modification N-acetylmethionine; by host. Positions 12 to 75 constitute a J domain; sequence QLMDLLGLER…VKYAHQPDFG (64 aa). The C4-type; atypical zinc-finger motif lies at 103–116; sequence CAKKMSANCICLLC. The segment at 122 to 143 adopts an H1C3-type; atypical zinc-finger fold; the sequence is HENRKLYRKDPLVWVDCYCFDC.

In terms of assembly, interacts with host PPP2R1A; the interaction inhibits PP2A activity.

It localises to the host cytoplasm. Its subcellular location is the host nucleus. Its function is as follows. Promotes efficient viral genome replication by accelerating both G1 and S phase progression of the cell cycle. Inhibits host PP2A by binding to the A subunit, thereby displacing lower affinity regulatory B subunit. Inactivation of PP2A in turn results in the transactivation of cyclin A and cyclin D1 promoters. Late during the infection cycle, ST may induce dephosphorylation of host eIF4E-binding protein EIF4EBP1 leading to the inhibition of cap-dependent translation. May establish and maintain high levels of viral genomes during persistent infection in cell culture. This chain is Small t antigen, found in Simian virus 40 (SV40).